The primary structure comprises 123 residues: Ribosome-binding factor A (123 aa).

It belongs to the RbfA family. In terms of assembly, monomer. Binds 30S ribosomal subunits, but not 50S ribosomal subunits or 70S ribosomes.

It localises to the cytoplasm. In terms of biological role, one of several proteins that assist in the late maturation steps of the functional core of the 30S ribosomal subunit. Associates with free 30S ribosomal subunits (but not with 30S subunits that are part of 70S ribosomes or polysomes). Required for efficient processing of 16S rRNA. May interact with the 5'-terminal helix region of 16S rRNA. The protein is Ribosome-binding factor A of Magnetococcus marinus (strain ATCC BAA-1437 / JCM 17883 / MC-1).